The following is an 88-amino-acid chain: UPF0297 protein RBAM_024500 (88 aa).

It belongs to the UPF0297 family.

In Bacillus velezensis (strain DSM 23117 / BGSC 10A6 / LMG 26770 / FZB42) (Bacillus amyloliquefaciens subsp. plantarum), this protein is UPF0297 protein RBAM_024500.